The sequence spans 315 residues: Putative HTH-type transcriptional regulatory protein PH1808 (315 aa).

In terms of domain architecture, HTH cro/C1-type spans 131-189 (LKALREEHGYSITELAGILGISRKSLQRYEKGESVVSLEVALRLEEVFDEPLVKPIDVL). Positions 142-161 (ITELAGILGISRKSLQRYEK) form a DNA-binding region, H-T-H motif.

This Pyrococcus horikoshii (strain ATCC 700860 / DSM 12428 / JCM 9974 / NBRC 100139 / OT-3) protein is Putative HTH-type transcriptional regulatory protein PH1808.